The following is a 908-amino-acid chain: Metabotropic glutamate receptor 8 (908 aa).

An N-terminal signal peptide occupies residues M1 to S33. Residues Q34 to W583 are Extracellular-facing. An intrachain disulfide couples C64 to C106. Residue N95 is glycosylated (N-linked (GlcNAc...) asparagine). L-glutamate contacts are provided by residues S156, A177–T179, and Y227. 7 disulfide bridges follow: C246-C534, C369-C384, C424-C431, C516-C535, C520-C538, C541-C553, and C556-C569. N298 carries N-linked (GlcNAc...) asparagine glycosylation. Residue D309 participates in L-glutamate binding. K401 serves as a coordination point for L-glutamate. 2 N-linked (GlcNAc...) asparagine glycosylation sites follow: N452 and N480. An N-linked (GlcNAc...) asparagine glycan is attached at N565. A helical membrane pass occupies residues A584–Y608. Over N609–E620 the chain is Cytoplasmic. A helical transmembrane segment spans residues L621–A641. The Extracellular segment spans residues A642–I647. The helical transmembrane segment at C648–T668 threads the bilayer. Topologically, residues K669–Q695 are cytoplasmic. The chain crosses the membrane as a helical span at residues L696 to V716. At D717–D746 the chain is on the extracellular side. The chain crosses the membrane as a helical span at residues L747–I768. Topologically, residues K769–K781 are cytoplasmic. A helical transmembrane segment spans residues P782–G803. At T804–L818 the chain is on the extracellular side. The chain crosses the membrane as a helical span at residues T819–F843. Topologically, residues H844–I908 are cytoplasmic. A Glycyl lysine isopeptide (Lys-Gly) (interchain with G-Cter in SUMO1) cross-link involves residue K882.

It belongs to the G-protein coupled receptor 3 family. Interacts with PICK1.

Its subcellular location is the cell membrane. G-protein coupled receptor for glutamate. Ligand binding causes a conformation change that triggers signaling via guanine nucleotide-binding proteins (G proteins) and modulates the activity of down-stream effectors, such as adenylate cyclase. Signaling inhibits adenylate cyclase activity. This is Metabotropic glutamate receptor 8 (GRM8) from Homo sapiens (Human).